Here is a 511-residue protein sequence, read N- to C-terminus: Maturase K (511 aa).

The protein belongs to the intron maturase 2 family. MatK subfamily.

The protein resides in the plastid. It localises to the chloroplast. Usually encoded in the trnK tRNA gene intron. Probably assists in splicing its own and other chloroplast group II introns. This Brachypodium distachyon (Purple false brome) protein is Maturase K.